The sequence spans 750 residues: Probable methylmalonyl-CoA mutase large subunit (750 aa).

Residues tyrosine 91, methionine 94, threonine 101, arginine 103, tyrosine 105, and serine 130 each contribute to the (R)-methylmalonyl-CoA site. Cob(II)alamin-binding residues include phenylalanine 133 and alanine 155. Threonine 211 and glutamine 213 together coordinate (R)-methylmalonyl-CoA. Residues valine 222 and arginine 223 each contribute to the cob(II)alamin site. (R)-methylmalonyl-CoA contacts are provided by arginine 223, histidine 260, arginine 299, and serine 301. 11 residues coordinate cob(II)alamin: glycine 349, glutamate 386, alanine 389, glycine 628, histidine 629, aspartate 630, arginine 631, serine 674, leucine 676, glycine 705, and threonine 728. Residues 616 to 748 (RPRILIAKMG…HRLAERLGYT (133 aa)) form the B12-binding domain.

This sequence belongs to the methylmalonyl-CoA mutase family. In terms of assembly, heterodimer of an alpha and a beta chain. Adenosylcob(III)alamin is required as a cofactor.

The catalysed reaction is (R)-methylmalonyl-CoA = succinyl-CoA. It functions in the pathway metabolic intermediate metabolism; propanoyl-CoA degradation; succinyl-CoA from propanoyl-CoA: step 3/3. In terms of biological role, catalyzes the isomerization of succinyl-CoA to methylmalonyl-CoA during synthesis of propionate from tricarboxylic acid-cycle intermediates. This chain is Probable methylmalonyl-CoA mutase large subunit (mutB), found in Mycobacterium bovis (strain ATCC BAA-935 / AF2122/97).